Consider the following 173-residue polypeptide: NADH-ubiquinone oxidoreductase chain 6 (173 aa).

The next 5 membrane-spanning stretches (helical) occupy residues 1 to 21 (MTYFVIFLGICFMLGVLAVAS), 27 to 47 (YGVVGLVVASVMGCGWLVSLG), 48 to 68 (VSFVSLALFLVYLGGMLVVFV), 87 to 107 (VVGYGLGFVLVVWMGVVLGGL), and 139 to 159 (CGVGLFLVAGWGLLLALFVVL).

This sequence belongs to the complex I subunit 6 family. In terms of assembly, core subunit of respiratory chain NADH dehydrogenase (Complex I) which is composed of 45 different subunits.

It localises to the mitochondrion inner membrane. It catalyses the reaction a ubiquinone + NADH + 5 H(+)(in) = a ubiquinol + NAD(+) + 4 H(+)(out). Its function is as follows. Core subunit of the mitochondrial membrane respiratory chain NADH dehydrogenase (Complex I) which catalyzes electron transfer from NADH through the respiratory chain, using ubiquinone as an electron acceptor. Essential for the catalytic activity and assembly of complex I. In Gallus gallus (Chicken), this protein is NADH-ubiquinone oxidoreductase chain 6 (MT-ND6).